Reading from the N-terminus, the 350-residue chain is Holliday junction branch migration complex subunit RuvB (350 aa).

Residues 1–22 form a disordered region; sequence MDHTASLSPVRPEAQPTDDRER. The large ATPase domain (RuvB-L) stretch occupies residues 1–185; the sequence is MDHTASLSPV…FGIVERFEFY (185 aa). ATP contacts are provided by residues Leu-24, Arg-25, Gly-66, Lys-69, Thr-70, Thr-71, 132–134, Arg-175, Tyr-185, and Arg-222; that span reads EDY. Thr-70 contributes to the Mg(2+) binding site. The interval 186 to 256 is small ATPAse domain (RuvB-S); it reads TPEELAAIVQ…IVRAGLAHLK (71 aa). A head domain (RuvB-H) region spans residues 259–350; the sequence is ELGLELHDIQ…PHSPEQGTLL (92 aa). Residues Arg-314 and Arg-319 each coordinate DNA.

The protein belongs to the RuvB family. As to quaternary structure, homohexamer. Forms an RuvA(8)-RuvB(12)-Holliday junction (HJ) complex. HJ DNA is sandwiched between 2 RuvA tetramers; dsDNA enters through RuvA and exits via RuvB. An RuvB hexamer assembles on each DNA strand where it exits the tetramer. Each RuvB hexamer is contacted by two RuvA subunits (via domain III) on 2 adjacent RuvB subunits; this complex drives branch migration. In the full resolvosome a probable DNA-RuvA(4)-RuvB(12)-RuvC(2) complex forms which resolves the HJ.

It localises to the cytoplasm. The enzyme catalyses ATP + H2O = ADP + phosphate + H(+). Functionally, the RuvA-RuvB-RuvC complex processes Holliday junction (HJ) DNA during genetic recombination and DNA repair, while the RuvA-RuvB complex plays an important role in the rescue of blocked DNA replication forks via replication fork reversal (RFR). RuvA specifically binds to HJ cruciform DNA, conferring on it an open structure. The RuvB hexamer acts as an ATP-dependent pump, pulling dsDNA into and through the RuvAB complex. RuvB forms 2 homohexamers on either side of HJ DNA bound by 1 or 2 RuvA tetramers; 4 subunits per hexamer contact DNA at a time. Coordinated motions by a converter formed by DNA-disengaged RuvB subunits stimulates ATP hydrolysis and nucleotide exchange. Immobilization of the converter enables RuvB to convert the ATP-contained energy into a lever motion, pulling 2 nucleotides of DNA out of the RuvA tetramer per ATP hydrolyzed, thus driving DNA branch migration. The RuvB motors rotate together with the DNA substrate, which together with the progressing nucleotide cycle form the mechanistic basis for DNA recombination by continuous HJ branch migration. Branch migration allows RuvC to scan DNA until it finds its consensus sequence, where it cleaves and resolves cruciform DNA. The polypeptide is Holliday junction branch migration complex subunit RuvB (Treponema pallidum (strain Nichols)).